The following is a 62-amino-acid chain: Small ribosomal subunit protein eS31 (62 aa).

The Zn(2+) site is built by cysteine 29, cysteine 32, cysteine 48, and cysteine 51. The C4-type zinc-finger motif lies at 29–51 (CPRCGSFMAFHKWPVPRWHCGKC).

Belongs to the eukaryotic ribosomal protein eS31 family. As to quaternary structure, part of the 30S ribosomal subunit. The cofactor is Zn(2+).

This Hyperthermus butylicus (strain DSM 5456 / JCM 9403 / PLM1-5) protein is Small ribosomal subunit protein eS31.